Here is a 213-residue protein sequence, read N- to C-terminus: ER lumen protein-retaining receptor (213 aa).

At methionine 1–asparagine 2 the chain is on the lumenal side. Residues isoleucine 3–leucine 21 traverse the membrane as a helical segment. Residues lysine 22–arginine 35 are Cytoplasmic-facing. Residues serine 36–threonine 53 traverse the membrane as a helical segment. At serine 54–threonine 61 the chain is on the lumenal side. A helical transmembrane segment spans residues valine 62 to valine 80. Residues lysine 81 to glutamate 96 lie on the Cytoplasmic side of the membrane. The helical transmembrane segment at phenylalanine 97–asparagine 110 threads the bilayer. Over histidine 111–glutamate 117 the chain is Lumenal. A helical transmembrane segment spans residues valine 118–methionine 137. Over leucine 138–alanine 149 the chain is Cytoplasmic. Residues histidine 150–tyrosine 168 traverse the membrane as a helical segment. Topologically, residues arginine 169–proline 178 are lumenal. A helical transmembrane segment spans residues isoleucine 179–isoleucine 199. Over threonine 200–alanine 213 the chain is Cytoplasmic.

It belongs to the ERD2 family.

It is found in the endoplasmic reticulum membrane. Functionally, required for the retention of luminal endoplasmic reticulum proteins. Determines the specificity of the luminal ER protein retention system. Also required for normal vesicular traffic through the Golgi. The polypeptide is ER lumen protein-retaining receptor (erd-2.1) (Caenorhabditis briggsae).